Consider the following 1704-residue polypeptide: Phospholipid-transporting ATPase ABCA3 (1704 aa).

The N-linked (GlcNAc...) asparagine glycan is linked to Asn14. The chain crosses the membrane as a helical span at residues 22–42 (VLVTVLELFLPLLFSGILIWL). Residues Asn53, Asn124, Asn140, and Asn228 are each glycosylated (N-linked (GlcNAc...) asparagine). 5 helical membrane-spanning segments follow: residues 251–271 (ISDP…MLSF), 307–327 (AWFL…TLLF), 344–364 (SLVL…SFMV), 373–393 (MAAT…FFVA), and 405–425 (LLSC…IGKF). In terms of domain architecture, ABC transporter 1 spans 530–763 (IKIKHLSKVF…YGAGYHMTLV (234 aa)). 566–573 (GHNGAGKT) contacts ATP. N-linked (GlcNAc...) asparagine glycans are attached at residues Asn620 and Asn945. Helical transmembrane passes span 1100-1120 (IALN…ILAV), 1144-1164 (SALL…LVVF), 1183-1203 (LLLM…SFFF), 1213-1233 (LTIF…IMRI), 1245-1265 (LDHV…SNFY), and 1310-1330 (MAAS…NLLW). The N-linked (GlcNAc...) asparagine glycan is linked to Asn1350. The 234-residue stretch at 1381–1614 (LIINELSKVY…FGSGYSLQAK (234 aa)) folds into the ABC transporter 2 domain. Residue 1416 to 1423 (GFNGAGKT) coordinates ATP.

In terms of assembly, homooligomer; disulfide-linked. N-glycosylated. Localization at intracellular vesicles is accompanied by processing of oligosaccharide from high mannose type to complex type. N-linked glycosylation at Asn-124 and Asn-140 is required for stability and efficient anterograde trafficking and prevents from proteasomal degradation. Post-translationally, proteolytically cleaved by CTSL and to a lower extent by CTSB within multivesicular bodies (MVB) and lamellar bodies (LB) leading to a mature form of 150 kDa. As to expression, highly expressed in lung, moderately expressed in stomach, intestine, and kidney and weakly expressed in thyroid, brain, liver, spleen, heart, testis, and thymus.

It is found in the endosome. It localises to the multivesicular body membrane. The protein localises to the cytoplasmic vesicle membrane. Its subcellular location is the late endosome membrane. The protein resides in the lysosome membrane. It carries out the reaction ATP + H2O + xenobioticSide 1 = ADP + phosphate + xenobioticSide 2.. The enzyme catalyses a 1,2-diacyl-sn-glycero-3-phosphocholine(in) + ATP + H2O = a 1,2-diacyl-sn-glycero-3-phosphocholine(out) + ADP + phosphate + H(+). It catalyses the reaction ATP + H2O + phospholipidSide 1 = ADP + phosphate + phospholipidSide 2.. The catalysed reaction is 1,2-dihexadecanoyl-sn-glycero-3-phosphocholine(in) + ATP + H2O = 1,2-dihexadecanoyl-sn-glycero-3-phosphocholine(out) + ADP + phosphate + H(+). It carries out the reaction cholesterol(in) + ATP + H2O = cholesterol(out) + ADP + phosphate + H(+). The enzyme catalyses a 1,2-diacyl-sn-glycero-3-phospho-(1'-sn-glycerol)(in) + ATP + H2O = a 1,2-diacyl-sn-glycero-3-phospho-(1'-sn-glycerol)(out) + ADP + phosphate + H(+). In terms of biological role, catalyzes the ATP-dependent transport of phospholipids such as phosphatidylcholine and phosphoglycerol from the cytoplasm into the lumen side of lamellar bodies, in turn participates in the lamellar bodies biogenesis and homeostasis of pulmonary surfactant. Transports preferentially phosphatidylcholine containing short acyl chains. In addition plays a role as an efflux transporter of miltefosine across macrophage membranes and free cholesterol (FC) through intralumenal vesicles by removing FC from the cell as a component of surfactant and protects cells from free cholesterol toxicity. The protein is Phospholipid-transporting ATPase ABCA3 of Rattus norvegicus (Rat).